An 83-amino-acid chain; its full sequence is U5-theraphotoxin-Hs1b 1 (83 aa).

The signal sequence occupies residues 1–21 (MKTSMFLTLTGLVLLFVVCYA). A propeptide spanning residues 22 to 49 (SESEEKEFPKELLSSIFAADSDFKEEER) is cleaved from the precursor. 3 cysteine pairs are disulfide-bonded: C51-C63, C56-C68, and C62-C75.

Belongs to the neurotoxin 10 (Hwtx-1) family. 51 (Hntx-8) subfamily. Hntx-8 sub-subfamily. As to expression, expressed by the venom gland.

Its subcellular location is the secreted. Its function is as follows. Weakly inhibits 5HT3A receptors and Kv1.3/KCNA3 voltage-gated potassium channels. Agglutinates erythrocytes. In Cyriopagopus schmidti (Chinese bird spider), this protein is U5-theraphotoxin-Hs1b 1.